The primary structure comprises 396 residues: Putative carbamoyltransferase YgeW (396 aa).

Residues 71–74 (STRT), glutamine 98, 165–168 (HPTQ), and 330–331 (CL) each bind carbamoyl phosphate.

This sequence belongs to the aspartate/ornithine carbamoyltransferase superfamily. In terms of assembly, homotrimer.

This chain is Putative carbamoyltransferase YgeW (ygeW), found in Escherichia coli O157:H7.